The chain runs to 349 residues: UDP-3-O-acylglucosamine N-acyltransferase 1 (349 aa).

Histidine 241 serves as the catalytic Proton acceptor.

Belongs to the transferase hexapeptide repeat family. LpxD subfamily. In terms of assembly, homotrimer.

The enzyme catalyses a UDP-3-O-[(3R)-3-hydroxyacyl]-alpha-D-glucosamine + a (3R)-hydroxyacyl-[ACP] = a UDP-2-N,3-O-bis[(3R)-3-hydroxyacyl]-alpha-D-glucosamine + holo-[ACP] + H(+). It functions in the pathway bacterial outer membrane biogenesis; LPS lipid A biosynthesis. Functionally, catalyzes the N-acylation of UDP-3-O-acylglucosamine using 3-hydroxyacyl-ACP as the acyl donor. Is involved in the biosynthesis of lipid A, a phosphorylated glycolipid that anchors the lipopolysaccharide to the outer membrane of the cell. This chain is UDP-3-O-acylglucosamine N-acyltransferase 1, found in Gloeobacter violaceus (strain ATCC 29082 / PCC 7421).